A 92-amino-acid polypeptide reads, in one-letter code: Large ribosomal subunit protein eL31 (92 aa).

An N-acetylserine modification is found at Ser2.

It belongs to the eukaryotic ribosomal protein eL31 family. In terms of assembly, part of the 50S ribosomal subunit.

In terms of biological role, binds to the 23S rRNA. Located at the polypeptide exit tunnel on the outside of the subunit. In Haloarcula marismortui (strain ATCC 43049 / DSM 3752 / JCM 8966 / VKM B-1809) (Halobacterium marismortui), this protein is Large ribosomal subunit protein eL31 (rpl31e).